We begin with the raw amino-acid sequence, 423 residues long: Levansucrase (423 aa).

Tryptophan 47, aspartate 48, serine 119, arginine 193, and aspartate 194 together coordinate sucrose. Aspartate 48 functions as the Nucleophile in the catalytic mechanism. The active-site Proton donor/acceptor is glutamate 278.

Belongs to the glycosyl hydrolase 68 family.

The protein localises to the secreted. The catalysed reaction is [6)-beta-D-fructofuranosyl-(2-&gt;](n) alpha-D-glucopyranoside + sucrose = [6)-beta-D-fructofuranosyl-(2-&gt;](n+1) alpha-D-glucopyranoside + D-glucose. Its function is as follows. Catalyzes the synthesis of levan, a fructose polymer, by transferring the fructosyl moiety from sucrose to a growing acceptor molecule. This chain is Levansucrase, found in Zymomonas mobilis subsp. mobilis (strain ATCC 10988 / DSM 424 / LMG 404 / NCIMB 8938 / NRRL B-806 / ZM1).